The primary structure comprises 307 residues: MDYIAEPATDMSHTSDWPLPADSLRLPIPAALLEKLAVHPLSRDLYPTSLGHYRRARDHRMSRERHDEHLLIYCSEGQGLLRVREGEAWREYRVGSGDLLWLPPGMAHDYAADDRQPWTIFWTHLRGDSATWLQHSAGYRDTPLRHWGLQHALLGGFEQLLEVRHSGYRFQHFLLAASRLRSLLCQLPLLRPLREGSLDLDGLHAYMREHLHARLELERLAAFCNLSKFHFVSRYKAITGRTPIQHFLHLKIEYACQLLDSSDQSVARVGQAVGYDDSYYFSRLFSKVMGLSPSAYRQRVRQGEGGA.

An HTH araC/xylS-type domain is found at 201 to 299 (DGLHAYMREH…GLSPSAYRQR (99 aa)). 2 DNA-binding regions (H-T-H motif) span residues 218 to 239 (ERLAAFCNLSKFHFVSRYKAIT) and 266 to 289 (VARVGQAVGYDDSYYFSRLFSKVM).

Functionally, regulatory protein for the mmsAB operon. Activates the transcription of the mmsAB genes. This Pseudomonas aeruginosa (strain ATCC 15692 / DSM 22644 / CIP 104116 / JCM 14847 / LMG 12228 / 1C / PRS 101 / PAO1) protein is MmsAB operon regulatory protein.